The following is a 115-amino-acid chain: Meromycolate extension acyl carrier protein (115 aa).

In terms of domain architecture, Carrier spans 3-81 (VTQEEIIAGI…DVVTYIQKLE (79 aa)). At Ser-41 the chain carries O-(pantetheine 4'-phosphoryl)serine.

Belongs to the acyl carrier protein (ACP) family. In terms of processing, 4'-phosphopantetheine is transferred from CoA to a specific serine of apo-AcpM.

Its subcellular location is the cytoplasm. Functionally, acyl carrier protein involved in meromycolate extension. This is Meromycolate extension acyl carrier protein (acpM) from Mycobacterium leprae (strain TN).